The chain runs to 506 residues: AMP phosphorylase (506 aa).

AMP-binding positions include G168, 194-199 (SRAITG), and T203. D256 functions as the Proton donor in the catalytic mechanism. Positions 264 and 288 each coordinate AMP.

It belongs to the thymidine/pyrimidine-nucleoside phosphorylase family. Type 2 subfamily.

It catalyses the reaction AMP + phosphate = alpha-D-ribose 1,5-bisphosphate + adenine. The enzyme catalyses CMP + phosphate = cytosine + alpha-D-ribose 1,5-bisphosphate. The catalysed reaction is UMP + phosphate = alpha-D-ribose 1,5-bisphosphate + uracil. In terms of biological role, catalyzes the conversion of AMP and phosphate to adenine and ribose 1,5-bisphosphate (R15P). Exhibits phosphorylase activity toward CMP and UMP in addition to AMP. Functions in an archaeal AMP degradation pathway, together with R15P isomerase and RubisCO. This chain is AMP phosphorylase, found in Methanococcoides burtonii (strain DSM 6242 / NBRC 107633 / OCM 468 / ACE-M).